The chain runs to 297 residues: HTH-type transcriptional regulator PerR (297 aa).

Residues 7–64 (APLNLLRAFEAAGRTGAFALAASELELSPSAISHAIRKLENLLDVRLFQRSTREITLT) enclose the HTH lysR-type domain. A DNA-binding region (H-T-H motif) is located at residues 24 to 44 (FALAASELELSPSAISHAIRK).

This sequence belongs to the LysR transcriptional regulatory family.

Apparent regulatory gene involved in peroxide resistance in stationary phase. This Escherichia coli (strain K12) protein is HTH-type transcriptional regulator PerR (perR).